The primary structure comprises 150 residues: 3-hydroxyacyl-[acyl-carrier-protein] dehydratase FabZ (150 aa).

His53 is an active-site residue.

The protein belongs to the thioester dehydratase family. FabZ subfamily.

It localises to the cytoplasm. It carries out the reaction a (3R)-hydroxyacyl-[ACP] = a (2E)-enoyl-[ACP] + H2O. In terms of biological role, involved in unsaturated fatty acids biosynthesis. Catalyzes the dehydration of short chain beta-hydroxyacyl-ACPs and long chain saturated and unsaturated beta-hydroxyacyl-ACPs. This Proteus mirabilis (strain HI4320) protein is 3-hydroxyacyl-[acyl-carrier-protein] dehydratase FabZ.